The sequence spans 170 residues: Large ribosomal subunit protein bL17 (170 aa).

Over residues A124–A134 the composition is skewed to low complexity. Residues A124 to N170 are disordered. 2 stretches are compositionally biased toward basic and acidic residues: residues P135–A148 and P156–N170.

This sequence belongs to the bacterial ribosomal protein bL17 family. Part of the 50S ribosomal subunit. Contacts protein L32.

In Desulfovibrio desulfuricans (strain ATCC 27774 / DSM 6949 / MB), this protein is Large ribosomal subunit protein bL17.